Here is a 412-residue protein sequence, read N- to C-terminus: Transcription termination factor 3, mitochondrial (412 aa).

The N-terminal 67 residues, 1-67 (MALLAQQLPR…IKTYRTLFWN (67 aa)), are a transit peptide targeting the mitochondrion.

It belongs to the mTERF family.

It localises to the mitochondrion. Functionally, binds promoter DNA and regulates initiation of transcription. Required for normal mitochondrial transcription and translation, and for normal assembly of mitochondrial respiratory complexes. Required for normal mitochondrial function. Maintains 16S rRNA levels and functions in mitochondrial ribosome assembly by regulating the biogenesis of the 39S ribosomal subunit. The chain is Transcription termination factor 3, mitochondrial (Mterf3) from Mus musculus (Mouse).